The primary structure comprises 368 residues: Outer membrane protein assembly factor BamC (368 aa).

A signal peptide spans Met1–Ala18. Cys19 is lipidated: N-palmitoyl cysteine. The S-diacylglycerol cysteine moiety is linked to residue Cys19.

It belongs to the BamC family. As to quaternary structure, part of the Bam complex.

The protein resides in the cell outer membrane. Its function is as follows. Part of the outer membrane protein assembly complex, which is involved in assembly and insertion of beta-barrel proteins into the outer membrane. The polypeptide is Outer membrane protein assembly factor BamC (Pseudoalteromonas atlantica (strain T6c / ATCC BAA-1087)).